A 214-amino-acid chain; its full sequence is Calcineurin B-like protein 8 (214 aa).

4 EF-hand domains span residues 35–70 (EIEALHDLFKKLSTSIINDGLIHKEEFLLALFRNGS), 71–106 (MQNLFADRVFYMFDRKRNGVIEFGEFVRSLSIFHPY), 108–143 (PEHEKSAFMFKLFDLHGTGFIEPHELKKMVGALLGE), and 152–187 (SIEAIVEQTMLEVDTNKDGKIDEEEWKELVAKNPSI). The Ca(2+) site is built by D165, N167, D169, K171, and E176. S205 is subject to Phosphoserine.

The protein belongs to the calcineurin regulatory subunit family. In terms of assembly, interacts with CIPK23. Interacts with CIPK14 at the cell membrane exclusively.

The protein resides in the cytoplasm. The protein localises to the nucleus. It is found in the cell membrane. Acts as a calcium sensor. CBL proteins interact with CIPK serine-threonine protein kinases. Binding of a CBL protein to the regulatory NAF domain of a CIPK protein lead to the activation of the kinase in a calcium-dependent manner. This Arabidopsis thaliana (Mouse-ear cress) protein is Calcineurin B-like protein 8 (CBL8).